Reading from the N-terminus, the 489-residue chain is Virion host shutoff protein (489 aa).

4 disordered regions span residues 110–135, 142–161, 285–316, and 333–363; these read EEAS…AFSN, SLAS…PSAA, RSQT…GGTE, and YEDD…ILTP. Residues 124 to 134 are compositionally biased toward polar residues; it reads ITDSRPSSAFS.

The protein belongs to the herpesviridae VHS protein family. Interacts with human EIF4H, EIF4A1 and EIF4A2; interaction with eIF4AI and EIF4A2 presumably allows Vhs protein to associate with the eIF4F cap-binding complex.

Its subcellular location is the virion. Its function is as follows. Minor structural protein that acts as an endoribonuclease during lytic infection. Degrades host mRNAs in the cytoplasm by cutting them at preferred sites, including some in regions of translation initiation. Together with inhibition of host splicing by ICP27, contributes to an overall decrease in host protein synthesis. Also, after the onset of viral transcription, accelerates the turnover of viral mRNA, thereby facilitating the sequential expression of different classes of viral genes. Binds translation initiation factors eIF4H, eIF4AI, and eIF4AII, thereby may interact directly with the translation initiation complex and thus digest specifically mRNAs. Also impedes antigen presentation by major histocompatibility complex class I and class II molecules, inhibits secretion of cytokines that would otherwise recruit lymphocytes and neutrophils cells to the site of infection and blocks the activation of dendritic cells. Impedes the alpha/beta interferon-mediated response to infection by evading the cGAS/ STING-mediated DNA-sensing pathway and degrading CGAS via its RNase activity. The protein is Virion host shutoff protein (UL41) of Human herpesvirus 1 (strain KOS) (HHV-1).